The following is a 146-amino-acid chain: Hemoglobin subunit beta-S/F (146 aa).

At valine 1 the chain carries N-acetylvaline. Residues 2 to 146 (HLTDGEKNAI…VANALSHKYH (145 aa)) form the Globin domain. Serine 44 bears the Phosphoserine mark. The residue at position 59 (lysine 59) is an N6-acetyllysine. Position 63 (histidine 63) interacts with heme b. Lysine 82 is modified (N6-acetyllysine). Heme b is bound at residue histidine 92. S-nitrosocysteine is present on cysteine 93. At lysine 144 the chain carries N6-acetyllysine.

This sequence belongs to the globin family. As to quaternary structure, heterotetramer of two alpha chains and two beta chains. As to expression, red blood cells.

In terms of biological role, involved in oxygen transport from the lung to the various peripheral tissues. The protein is Hemoglobin subunit beta-S/F of Urocitellus townsendii (Townsend's ground squirrel).